Here is a 323-residue protein sequence, read N- to C-terminus: Galectin-4 (323 aa).

2 Galectin domains span residues 19–150 (YYKP…INFI) and 194–323 (YKTR…YVQI). A beta-D-galactoside is bound at residue 256–262 (WGAEERK).

In terms of assembly, monomer.

In terms of biological role, galectin that binds lactose and a related range of sugars. May be involved in the assembly of adherens junctions. The polypeptide is Galectin-4 (LGALS4) (Sus scrofa (Pig)).